The primary structure comprises 856 residues: DNA mismatch repair protein MutS (856 aa).

Gly623–Ser630 lines the ATP pocket.

The protein belongs to the DNA mismatch repair MutS family.

Its function is as follows. This protein is involved in the repair of mismatches in DNA. It is possible that it carries out the mismatch recognition step. This protein has a weak ATPase activity. This chain is DNA mismatch repair protein MutS, found in Natronomonas pharaonis (strain ATCC 35678 / DSM 2160 / CIP 103997 / JCM 8858 / NBRC 14720 / NCIMB 2260 / Gabara) (Halobacterium pharaonis).